A 346-amino-acid polypeptide reads, in one-letter code: B3 domain-containing protein At3g25182 (346 aa).

The segment at 168–187 is disordered; sequence KRRAVEQRKRTGGVKKAKVA. Residues 237–338 constitute a DNA-binding region (TF-B3); that stretch reads FNNLLRNDFL…ILCFAMEQRS (102 aa).

It is found in the nucleus. The chain is B3 domain-containing protein At3g25182 from Arabidopsis thaliana (Mouse-ear cress).